The sequence spans 466 residues: Argininosuccinate lyase 1 (466 aa).

This sequence belongs to the lyase 1 family. Argininosuccinate lyase subfamily.

It localises to the cytoplasm. It catalyses the reaction 2-(N(omega)-L-arginino)succinate = fumarate + L-arginine. It participates in amino-acid biosynthesis; L-arginine biosynthesis; L-arginine from L-ornithine and carbamoyl phosphate: step 3/3. This is Argininosuccinate lyase 1 from Mesorhizobium japonicum (strain LMG 29417 / CECT 9101 / MAFF 303099) (Mesorhizobium loti (strain MAFF 303099)).